We begin with the raw amino-acid sequence, 193 residues long: Putative 3-methyladenine DNA glycosylase (193 aa).

Belongs to the DNA glycosylase MPG family.

This Francisella tularensis subsp. tularensis (strain FSC 198) protein is Putative 3-methyladenine DNA glycosylase.